We begin with the raw amino-acid sequence, 860 residues long: MEPGRNQLFVVILLTSACLVYCSQYVTVFYGIPAWKNASIPLFCATKNRDTWGTIQCLPDNDDYQEIILNVTEAFDAWNNTVTEQAVEDVWHLFETSIKPCVKLTPLCVAMNCSRVQGNTTTPNPRTSSSTTSRPPTSAASIINETSNCIENNTCAGLGYEEMMQCEFNMKGLEQDKKRRYKDTWYLEDVVCDNTTAGTCYMRHCNTSIIKESCDKHYWDAMRFRYCAPPGFALLRCNDTNYSGFEPKCTKVVAASCTRMMETQTSTWFGFNGTRAENRTYIYWHGRDNRTIISLNKYYNLTMRCKRPGNKTVLPITLMSGLVFHSQPINTRPRQAWCRFGGRWREAMQEVKQTLVQHPRYKGINDTGKINFTKPGAGSDPEVAFMWTNCRGEFLYCNMTWFLNWVEDKNQTRRNYCHIKQIINTWHKVGKNVYLPPREGELACESTVTSIIANIDIDKNRTHTNITFSAEVAELYRLELGDYKLIEITPIGFAPTDQRRYSSTPVRNKRGVFVLGFLGFLATAGSAMGARSLTLSAQSRTLLAGIVQQQQQLLDVVKRQQEMLRLTVWGTKNLQARVTAIEKYLKHQAQLNSWGCAFRQVCHTTVPWVNDSLSPDWKNMTWQEWEKQVRYLEANISQSLEEAQIQQEKNMYELQKLNSWDILGNWFDLTSWVKYIQYGVHIVVGIIALRIAIYVVQLLSRFRKGYRPVFSSPPGYLQQIHIHKDRGQPANEGTEEDVGGDSGYDLWPWPINYVQFLIHLLTRLLIGLYNICRDLLSKNSPTRRLISQSLTAIRDWLRLKAAQLQYGCEWIQEAFQAFARTTRETLAGAWGWLWEAARRIGRGILAVPRRIRQGAELALL.

Positions 1 to 22 (MEPGRNQLFVVILLTSACLVYC) are cleaved as a signal peptide. Topologically, residues 23-678 (SQYVTVFYGI…LTSWVKYIQY (656 aa)) are extracellular. Asparagine 37 carries an N-linked (GlcNAc...) asparagine; by host glycan. An intrachain disulfide couples cysteine 44 to cysteine 57. N-linked (GlcNAc...) asparagine; by host glycosylation is found at asparagine 70, asparagine 79, asparagine 112, asparagine 119, asparagine 144, asparagine 152, asparagine 194, asparagine 206, asparagine 238, asparagine 241, asparagine 272, asparagine 278, asparagine 289, asparagine 300, asparagine 310, asparagine 365, asparagine 371, asparagine 398, asparagine 410, asparagine 460, and asparagine 465. 5 disulfide bridges follow: cysteine 101/cysteine 214, cysteine 108/cysteine 205, cysteine 113/cysteine 166, cysteine 227/cysteine 257, and cysteine 237/cysteine 249. Residues 113 to 165 (CSRVQGNTTTPNPRTSSSTTSRPPTSAASIINETSNCIENNTCAGLGYEEMMQ) form a V1 region. The disordered stretch occupies residues 118–139 (GNTTTPNPRTSSSTTSRPPTSA). Residues 119–139 (NTTTPNPRTSSSTTSRPPTSA) show a composition bias toward low complexity. The interval 166–205 (CEFNMKGLEQDKKRRYKDTWYLEDVVCDNTTAGTCYMRHC) is V2. The interval 305-337 (CKRPGNKTVLPITLMSGLVFHSQPINTRPRQAW) is V3. Residues cysteine 305 and cysteine 338 are joined by a disulfide bond. Intrachain disulfides connect cysteine 390-cysteine 444 and cysteine 397-cysteine 417. Positions 397–417 (CNMTWFLNWVEDKNQTRRNYC) are V4. The tract at residues 460 to 468 (NRTHTNITF) is V5. The fusion peptide stretch occupies residues 511-531 (GVFVLGFLGFLATAGSAMGAR). Residues 574 to 590 (LQARVTAIEKYLKHQAQ) form an immunosuppression region. N-linked (GlcNAc...) asparagine; by host glycosylation is found at asparagine 610, asparagine 619, and asparagine 635. Residues 623 to 644 (QEWEKQVRYLEANISQSLEEAQ) adopt a coiled-coil conformation. Positions 656–677 (KLNSWDILGNWFDLTSWVKYIQ) are MPER; binding to GalCer. A helical membrane pass occupies residues 679–699 (GVHIVVGIIALRIAIYVVQLL). Over 700-860 (SRFRKGYRPV…IRQGAELALL (161 aa)) the chain is Cytoplasmic. The YXXV motif; contains endocytosis signal signature appears at 706–709 (YRPV). Cysteine 772 carries the S-palmitoyl cysteine; by host lipid modification. Positions 859–860 (LL) match the Di-leucine internalization motif motif.

As to quaternary structure, the mature envelope protein (Env) consists of a homotrimer of non-covalently associated gp120-gp41 heterodimers. The resulting complex protrudes from the virus surface as a spike. There seems to be as few as 10 spikes on the average virion. Interacts with human CD4, CCR5 and CXCR4, to form a P4HB/PDI-CD4-CXCR4-gp120 complex. Gp120 also interacts with the C-type lectins CD209/DC-SIGN and CLEC4M/DC-SIGNR (collectively referred to as DC-SIGN(R)). Gp120 and gp41 interact with GalCer. In terms of assembly, the mature envelope protein (Env) consists of a homotrimer of non-covalently associated gp120-gp41 heterodimers. The resulting complex protrudes from the virus surface as a spike. There seems to be as few as 10 spikes on the average virion. Specific enzymatic cleavages in vivo yield mature proteins. Envelope glycoproteins are synthesized as an inactive precursor that is heavily N-glycosylated and processed likely by host cell furin in the Golgi to yield the mature SU and TM proteins. The cleavage site between SU and TM requires the minimal sequence [KR]-X-[KR]-R. In terms of processing, palmitoylation of the transmembrane protein and of Env polyprotein (prior to its proteolytic cleavage) is essential for their association with host cell membrane lipid rafts. Palmitoylation is therefore required for envelope trafficking to classical lipid rafts, but not for viral replication.

The protein localises to the virion membrane. Its subcellular location is the host cell membrane. The protein resides in the host endosome membrane. Its function is as follows. The surface protein gp120 (SU) attaches the virus to the host lymphoid cell by binding to the primary receptor CD4. This interaction induces a structural rearrangement creating a high affinity binding site for a chemokine coreceptor like CXCR4 and/or CCR5. This peculiar 2 stage receptor-interaction strategy allows gp120 to maintain the highly conserved coreceptor-binding site in a cryptic conformation, protected from neutralizing antibodies. Since CD4 also displays a binding site for the disulfide-isomerase P4HB/PDI, a P4HB/PDI-CD4-CXCR4-gp120 complex may form. In that complex, P4HB/PDI could reach and reduce gp120 disulfide bonds, causing major conformational changes in gp120. TXN, another PDI family member could also be involved in disulfide rearrangements in Env during fusion. These changes are transmitted to the transmembrane protein gp41 and are thought to activate its fusogenic potential by unmasking its fusion peptide. In terms of biological role, the surface protein gp120 is a ligand for CD209/DC-SIGN and CLEC4M/DC-SIGNR, which are respectively found on dendritic cells (DCs), and on endothelial cells of liver sinusoids and lymph node sinuses. These interactions allow capture of viral particles at mucosal surfaces by these cells and subsequent transmission to permissive cells. DCs are professional antigen presenting cells, critical for host immunity by inducing specific immune responses against a broad variety of pathogens. They act as sentinels in various tissues where they take up antigen, process it, and present it to T-cells following migration to lymphoid organs. HIV subverts the migration properties of dendritic cells to gain access to CD4+ T-cells in lymph nodes. Virus transmission to permissive T-cells occurs either in trans (without DCs infection, through viral capture and transmission), or in cis (following DCs productive infection, through the usual CD4-gp120 interaction), thereby inducing a robust infection. In trans infection, bound virions remain infectious over days and it is proposed that they are not degraded, but protected in non-lysosomal acidic organelles within the DCs close to the cell membrane thus contributing to the viral infectious potential during DCs' migration from the periphery to the lymphoid tissues. On arrival at lymphoid tissues, intact virions recycle back to DCs' cell surface allowing virus transmission to CD4+ T-cells. Virion capture also seems to lead to MHC-II-restricted viral antigen presentation, and probably to the activation of HIV-specific CD4+ cells. Functionally, the transmembrane protein gp41 (TM) acts as a class I viral fusion protein. Under the current model, the protein has at least 3 conformational states: pre-fusion native state, pre-hairpin intermediate state, and post-fusion hairpin state. During fusion of viral and target intracellular membranes, the coiled coil regions (heptad repeats) assume a trimer-of-hairpins structure, positioning the fusion peptide in close proximity to the C-terminal region of the ectodomain. The formation of this structure appears to drive apposition and subsequent fusion of viral and target cell membranes. Complete fusion occurs in host cell endosomes and is dynamin-dependent, however some lipid transfer might occur at the plasma membrane. The virus undergoes clathrin-dependent internalization long before endosomal fusion, thus minimizing the surface exposure of conserved viral epitopes during fusion and reducing the efficacy of inhibitors targeting these epitopes. Membranes fusion leads to delivery of the nucleocapsid into the cytoplasm. The envelope glycoprotein gp160 precursor down-modulates cell surface CD4 antigen by interacting with it in the endoplasmic reticulum and blocking its transport to the cell surface. Its function is as follows. The gp120-gp41 heterodimer seems to contribute to T-cell depletion during HIV-1 infection. The envelope glycoproteins expressed on the surface of infected cells induce apoptosis through an interaction with uninfected cells expressing the receptor (CD4) and the coreceptors CXCR4 or CCR5. This type of bystander killing may be obtained by at least three distinct mechanisms. First, the interaction between the 2 cells can induce cellular fusion followed by nuclear fusion within the syncytium. Syncytia are condemned to die from apoptosis. Second, the 2 interacting cells may not fuse entirely and simply exchange plasma membrane lipids, after a sort of hemifusion process, followed by rapid death. Third, it is possible that virus-infected cells, on the point of undergoing apoptosis, fuse with CD4-expressing cells, in which case apoptosis is rapidly transmitted from one cell to the other and thus occurs in a sort of contagious fashion. In terms of biological role, the gp120-gp41 heterodimer allows rapid transcytosis of the virus through CD4 negative cells such as simple epithelial monolayers of the intestinal, rectal and endocervical epithelial barriers. Both gp120 and gp41 specifically recognize glycosphingolipids galactosyl-ceramide (GalCer) or 3' sulfo-galactosyl-ceramide (GalS) present in the lipid rafts structures of epithelial cells. Binding to these alternative receptors allows the rapid transcytosis of the virus through the epithelial cells. This transcytotic vesicle-mediated transport of virions from the apical side to the basolateral side of the epithelial cells does not involve infection of the cells themselves. The protein is Envelope glycoprotein gp160 (env) of Homo sapiens (Human).